The primary structure comprises 6486 residues: Tyrocidine synthase 3 (6486 aa).

Positions 466–1038 (IFELIAEQAS…VAELARFLSR (573 aa)) are domain 1 (asparagine-activating). 6 consecutive Carrier domains span residues 965–1040 (APQN…SRSE), 2002–2077 (APRN…AAAR), 3040–3115 (APTN…ATSG), 4075–4150 (AAQN…AESA), 5119–5194 (APRS…EETA), and 6162–6237 (APRN…THKR). O-(pantetheine 4'-phosphoryl)serine is present on residues S1000, S2037, S3075, S4110, S5154, and S6197. The segment at 1521 to 2070 (YEEYALTYRE…FESPTIAGLA (550 aa)) is domain 2 (glutamine-activating). Residues 2536 to 3113 (NKTLQALFEE…IKALAQYVAT (578 aa)) are domain 3 (tyrosine-activating). The interval 3590 to 4149 (EHAAVVMDGQ…HELAAHIAES (560 aa)) is domain 4 (valine-activating). The interval 4606 to 5203 (YPTDKTFQKL…AKGNVFSIEP (598 aa)) is domain 5 (ornithine-activating). The tract at residues 5658–6245 (LHQLFEEQVD…KRFESRYGTA (588 aa)) is domain 6 (leucine-activating).

It belongs to the ATP-dependent AMP-binding enzyme family. In terms of assembly, large multienzyme complex of TycA, TycB and TycC. Pantetheine 4'-phosphate is required as a cofactor.

The protein operates within antibiotic biosynthesis; tyrocidine biosynthesis. In terms of biological role, incorporates six amino acids (for tyrocidine A, Asn, Gln, Tyr, Val, Orn, and Leu) in their L-configuration into the peptide product. This Brevibacillus parabrevis protein is Tyrocidine synthase 3 (tycC).